The chain runs to 306 residues: Bifunctional protein FolD (306 aa).

NADP(+)-binding positions include 169–171, serine 194, and isoleucine 235; that span reads GRS.

It belongs to the tetrahydrofolate dehydrogenase/cyclohydrolase family. Homodimer.

The enzyme catalyses (6R)-5,10-methylene-5,6,7,8-tetrahydrofolate + NADP(+) = (6R)-5,10-methenyltetrahydrofolate + NADPH. It carries out the reaction (6R)-5,10-methenyltetrahydrofolate + H2O = (6R)-10-formyltetrahydrofolate + H(+). It participates in one-carbon metabolism; tetrahydrofolate interconversion. Its function is as follows. Catalyzes the oxidation of 5,10-methylenetetrahydrofolate to 5,10-methenyltetrahydrofolate and then the hydrolysis of 5,10-methenyltetrahydrofolate to 10-formyltetrahydrofolate. The protein is Bifunctional protein FolD of Thermosynechococcus vestitus (strain NIES-2133 / IAM M-273 / BP-1).